The chain runs to 716 residues: Phosphoribosylformylglycinamidine synthase subunit PurL (716 aa).

His-34 is a catalytic residue. Tyr-37 lines the ATP pocket. Glu-78 provides a ligand contact to Mg(2+). Substrate is bound by residues 79–82 and Arg-101; that span reads SHNH. His-80 functions as the Proton acceptor in the catalytic mechanism. Asp-102 contacts Mg(2+). Gln-226 is a substrate binding site. A Mg(2+)-binding site is contributed by Asp-254. 298–300 lines the substrate pocket; that stretch reads ESQ. Positions 474 and 511 each coordinate ATP. Asn-512 contacts Mg(2+). Ser-514 is a binding site for substrate.

This sequence belongs to the FGAMS family. In terms of assembly, monomer. Part of the FGAM synthase complex composed of 1 PurL, 1 PurQ and 2 PurS subunits.

The protein resides in the cytoplasm. It carries out the reaction N(2)-formyl-N(1)-(5-phospho-beta-D-ribosyl)glycinamide + L-glutamine + ATP + H2O = 2-formamido-N(1)-(5-O-phospho-beta-D-ribosyl)acetamidine + L-glutamate + ADP + phosphate + H(+). Its pathway is purine metabolism; IMP biosynthesis via de novo pathway; 5-amino-1-(5-phospho-D-ribosyl)imidazole from N(2)-formyl-N(1)-(5-phospho-D-ribosyl)glycinamide: step 1/2. Functionally, part of the phosphoribosylformylglycinamidine synthase complex involved in the purines biosynthetic pathway. Catalyzes the ATP-dependent conversion of formylglycinamide ribonucleotide (FGAR) and glutamine to yield formylglycinamidine ribonucleotide (FGAM) and glutamate. The FGAM synthase complex is composed of three subunits. PurQ produces an ammonia molecule by converting glutamine to glutamate. PurL transfers the ammonia molecule to FGAR to form FGAM in an ATP-dependent manner. PurS interacts with PurQ and PurL and is thought to assist in the transfer of the ammonia molecule from PurQ to PurL. The polypeptide is Phosphoribosylformylglycinamidine synthase subunit PurL (Methanobrevibacter smithii (strain ATCC 35061 / DSM 861 / OCM 144 / PS)).